The sequence spans 347 residues: Olfactory receptor 2M2 (347 aa).

Over 1–25 (MAWENQTFNSDFILLGIFNHSPPHT) the chain is Extracellular. Residue Asn-5 is glycosylated (N-linked (GlcNAc...) asparagine). The chain crosses the membrane as a helical span at residues 26 to 49 (FLFFLVLGIFLVAFMGNSVMVLLI). The Cytoplasmic portion of the chain corresponds to 50-57 (YLDTQLHT). A helical membrane pass occupies residues 58-79 (PMYFLLSQLSLMDLMLICTTVP). Topologically, residues 80–100 (KMAFNYLSGSKSISMAGCVTQ) are extracellular. Residues Cys-97 and Cys-189 are joined by a disulfide bond. Residues 101-120 (IFFYISLSGSECFLLAVMAY) form a helical membrane-spanning segment. At 121 to 139 (DRYIAICHPLRYTNLMNPK) the chain is on the cytoplasmic side. The helical transmembrane segment at 140–158 (ICGLMATFSWILGSTDGII) threads the bilayer. Residues 159–195 (DAVATFSFSFCGSREIAHFFCEFPSLLILSCNDTSIF) lie on the Extracellular side of the membrane. Asn-190 carries an N-linked (GlcNAc...) asparagine glycan. A helical membrane pass occupies residues 196-219 (EEVIFICCIVMLVFPVAIIIASYA). Residues 220–236 (RVILAVIHMGSGEGRCK) are Cytoplasmic-facing. Residues 237–259 (AFTTCSSHLMVVGMYYGAALFMY) form a helical membrane-spanning segment. Residues 260–272 (IRPTSDHSPTQDK) are Extracellular-facing. A helical transmembrane segment spans residues 273–292 (MVSVFYTILTPMLNPLIYSL). Over 293–347 (RNKEVTRAFMKILGKGKSESELPHKLYVLLFAKFFFLISIFFYDVKILALIMYIA) the chain is Cytoplasmic.

Belongs to the G-protein coupled receptor 1 family.

Its subcellular location is the cell membrane. In terms of biological role, odorant receptor. This Homo sapiens (Human) protein is Olfactory receptor 2M2 (OR2M2).